Reading from the N-terminus, the 209-residue chain is Chromophore lyase CpcT/CpeT 1 (209 aa).

This sequence belongs to the CpcT/CpeT biliprotein lyase family.

Its function is as follows. Covalently attaches a chromophore to Cys residue(s) of phycobiliproteins. The polypeptide is Chromophore lyase CpcT/CpeT 1 (Trichodesmium erythraeum (strain IMS101)).